A 245-amino-acid chain; its full sequence is Cuticle protein (245 aa).

A Chitin-binding type R&amp;R domain is found at 25 to 86 (VSYAAAPALV…TGDSKSQQES (62 aa)). The interval 79–100 (DSKSQQESRSGDVVQGSYSVVD) is disordered. Repeat copies occupy residues 92–95 (VQGS), 108–111 (VDYT), and 118–121 (FNAV).

In terms of biological role, component of the cuticle of African malaria mosquito. The chain is Cuticle protein (Ccp84Ab) from Anopheles gambiae (African malaria mosquito).